The chain runs to 345 residues: Phosphoribosylformylglycinamidine cyclo-ligase (345 aa).

It belongs to the AIR synthase family.

It localises to the cytoplasm. The catalysed reaction is 2-formamido-N(1)-(5-O-phospho-beta-D-ribosyl)acetamidine + ATP = 5-amino-1-(5-phospho-beta-D-ribosyl)imidazole + ADP + phosphate + H(+). The protein operates within purine metabolism; IMP biosynthesis via de novo pathway; 5-amino-1-(5-phospho-D-ribosyl)imidazole from N(2)-formyl-N(1)-(5-phospho-D-ribosyl)glycinamide: step 2/2. The sequence is that of Phosphoribosylformylglycinamidine cyclo-ligase from Methylococcus capsulatus (strain ATCC 33009 / NCIMB 11132 / Bath).